A 406-amino-acid chain; its full sequence is Arginine deiminase (406 aa).

The active-site Amidino-cysteine intermediate is the Cys396.

It belongs to the arginine deiminase family.

Its subcellular location is the cytoplasm. It catalyses the reaction L-arginine + H2O = L-citrulline + NH4(+). It participates in amino-acid degradation; L-arginine degradation via ADI pathway; carbamoyl phosphate from L-arginine: step 1/2. The polypeptide is Arginine deiminase (Aliivibrio fischeri (strain ATCC 700601 / ES114) (Vibrio fischeri)).